The sequence spans 385 residues: A-type ATP synthase subunit C (385 aa).

It belongs to the V-ATPase V0D/AC39 subunit family. Has multiple subunits with at least A(3), B(3), C, D, E, F, H, I and proteolipid K(x).

Its subcellular location is the cell membrane. Its function is as follows. Component of the A-type ATP synthase that produces ATP from ADP in the presence of a proton gradient across the membrane. This is A-type ATP synthase subunit C from Methanosphaera stadtmanae (strain ATCC 43021 / DSM 3091 / JCM 11832 / MCB-3).